The primary structure comprises 159 residues: Ribosomal RNA large subunit methyltransferase H (159 aa).

S-adenosyl-L-methionine contacts are provided by residues Leu-76, Gly-107, and 126-131 (LSSLTL).

This sequence belongs to the RNA methyltransferase RlmH family. As to quaternary structure, homodimer.

It is found in the cytoplasm. The enzyme catalyses pseudouridine(1915) in 23S rRNA + S-adenosyl-L-methionine = N(3)-methylpseudouridine(1915) in 23S rRNA + S-adenosyl-L-homocysteine + H(+). Its function is as follows. Specifically methylates the pseudouridine at position 1915 (m3Psi1915) in 23S rRNA. In Cupriavidus necator (strain ATCC 17699 / DSM 428 / KCTC 22496 / NCIMB 10442 / H16 / Stanier 337) (Ralstonia eutropha), this protein is Ribosomal RNA large subunit methyltransferase H.